The chain runs to 281 residues: D-arabinitol 2-dehydrogenase [ribulose-forming] (281 aa).

NADP(+) contacts are provided by Leu-31 and Asn-52. Ser-169 functions as the Proton donor in the catalytic mechanism. NADP(+)-binding residues include Tyr-184, Lys-188, Ile-217, and Thr-219. Tyr-184 (proton acceptor) is an active-site residue. The active-site Lowers pKa of active site Tyr is the Lys-188.

This sequence belongs to the short-chain dehydrogenases/reductases (SDR) family.

It carries out the reaction D-arabinitol + NAD(+) = D-ribulose + NADH + H(+). It functions in the pathway carbohydrate metabolism; D-arabinitol metabolism. The chain is D-arabinitol 2-dehydrogenase [ribulose-forming] (ARD1) from Candida albicans (strain WO-1) (Yeast).